Here is a 229-residue protein sequence, read N- to C-terminus: Potassium/proton antiporter CemA (229 aa).

3 helical membrane-spanning segments follow: residues 7–27 (FTPLLYLASLVFLPWWISLSF), 114–134 (IICFVILSGYSIWGNEELVIL), and 189–209 (ILSGLVSTFPVILDTLFKFWI).

Belongs to the CemA family.

The protein resides in the plastid. The protein localises to the chloroplast inner membrane. The enzyme catalyses K(+)(in) + H(+)(out) = K(+)(out) + H(+)(in). Functionally, contributes to K(+)/H(+) antiport activity by supporting proton efflux to control proton extrusion and homeostasis in chloroplasts in a light-dependent manner to modulate photosynthesis. Prevents excessive induction of non-photochemical quenching (NPQ) under continuous-light conditions. Indirectly promotes efficient inorganic carbon uptake into chloroplasts. The chain is Potassium/proton antiporter CemA from Panax ginseng (Korean ginseng).